A 289-amino-acid polypeptide reads, in one-letter code: WUSCHEL-related homeobox 1 (289 aa).

The segment covering 1 to 11 (MDHMQQQQRQQ) has biased composition (low complexity). Residues 1 to 34 (MDHMQQQQRQQVGGGGGEEVAGRGGVPVCRPSGT) are disordered. Residues 12–25 (VGGGGGEEVAGRGG) are compositionally biased toward gly residues. The homeobox; WUS-type DNA-binding region spans 31–96 (PSGTRWTPTT…NHKARERQKK (66 aa)).

It belongs to the WUS homeobox family. Interacts with TPR1, TPR2 and TPR3. Expressed in young leaf primordia. Expressed in branch an floral meristems. Transiently expressed in the shoot apex.

Its subcellular location is the nucleus. Transcription repressor required for the formation and development of tiller buds and panicles. Required for tiller formation and female sterility. Required for the early developmental stages of axillary meristem formation. Plays a role in maintaining the axillary premeristem zone and in promoting the formation of the axillary meristem by promoting OSH1 expression. Does not seem to be involved in maintenance of the shoot apical meristem (SAM). The chain is WUSCHEL-related homeobox 1 from Oryza sativa subsp. japonica (Rice).